Consider the following 301-residue polypeptide: Multifunctional dioxygenase prhA (301 aa).

Positions 130, 132, and 214 each coordinate Fe cation.

It belongs to the PhyH family. Homodimer. Requires Fe cation as cofactor.

The catalysed reaction is preaustinoid A1 + 2-oxoglutarate + O2 = berkeleyone B + succinate + CO2 + H2O. The enzyme catalyses berkeleyone B + 2-oxoglutarate + O2 = berkeleydione + succinate + CO2 + H2O. It carries out the reaction preaustinoid A + 2 2-oxoglutarate + 2 O2 = berkeleytrione + 2 succinate + 2 CO2 + H2O. Its pathway is secondary metabolite biosynthesis; terpenoid biosynthesis. Its function is as follows. Multifunctional dioxygenase; part of the gene cluster that mediates the biosynthesis of paraherquonin, a meroterpenoid with a unique, highly congested hexacyclic molecular architecture. The first step of the pathway is the synthesis of 3,5-dimethylorsellinic acid (DMOA) by the polyketide synthase prhL. Synthesis of DMOA is followed by farnesylation by the prenyltransferase prhE, methylesterification by the methyl-transferase prhM, epoxidation of the prenyl chain by the flavin-dependent monooxygenase prhF, and cyclization of the farnesyl moiety by the terpene cyclase prhH, to yield the tetracyclic intermediate, protoaustinoid A. The short chain dehydrogenase prhI then oxidizes the C-3 alcohol group of the terpene cyclase product to transform protoaustinoid A into protoaustinoid B. The FAD-binding monooxygenase prhJ catalyzes the oxidation of protoaustinoid B into preaustinoid A which is further oxidized into preaustinoid A1 by FAD-binding monooxygenase phrK. Finally, prhA leads to berkeleydione via the berkeleyone B intermediate. PrhA is a multifunctional dioxygenase that first desaturates at C5-C6 to form berkeleyone B, followed by rearrangement of the A/B-ring to form the cycloheptadiene moiety in berkeleydione. Berkeleydione serves as the key intermediate for the biosynthesis of paraherquonin as well as many other meroterpenoids. The cytochrome P450 monooxygenases prhB, prhD, and prhN, as well as the isomerase prhC, are probably involved in the late stage of paraherquonin biosynthesis, after the production of berkeleydione. Especially prhC might be a multifunctional enzyme that catalyzes the D-ring expansion via intramolecular methoxy rearrangement, as well as the hydrolysis of the expanded D-ring. The protein is Multifunctional dioxygenase prhA of Penicillium brasilianum.